The primary structure comprises 837 residues: Protein ROD1 (837 aa).

Ser-138 and Ser-141 each carry phosphoserine. Lys-401 participates in a covalent cross-link: Glycyl lysine isopeptide (Lys-Gly) (interchain with G-Cter in ubiquitin). Residue Ser-436 is modified to Phosphoserine. Positions 487–490 match the PY-motif motif; the sequence is PPNY. Phosphoserine is present on Ser-536. Positions 656–659 match the PY-motif motif; the sequence is PPAY. Disordered stretches follow at residues 675-726 and 763-837; these read ERPQ…SVSL and SFTS…RDRS. Positions 685–703 are enriched in low complexity; that stretch reads TSSLLPLPGSSKSSNNLKR. Positions 716 to 726 are enriched in polar residues; that stretch reads PRNNSGSSVSL. Phosphoserine is present on residues Ser-720 and Ser-725. The span at 763–773 shows a compositional bias: low complexity; the sequence is SFTSNSSSKNN. The span at 774-792 shows a compositional bias: basic and acidic residues; that stretch reads SHFDKTDSTSDANKPREEE. The segment covering 805 to 815 has biased composition (low complexity); it reads SSSVRSNNSNS.

This sequence belongs to the arrestin family. In terms of assembly, interacts with RSP5 via its 2 PY-motifs.

Its subcellular location is the membrane. Functionally, mediates resistance to o-dinitrobenzene, calcium and zinc. This Saccharomyces cerevisiae (strain ATCC 204508 / S288c) (Baker's yeast) protein is Protein ROD1 (ROD1).